Consider the following 104-residue polypeptide: Fluoride-specific ion channel FluC 2 (104 aa).

3 consecutive transmembrane segments (helical) span residues 22–42 (IGPYVGTFIANMAACVVLAAV), 48–68 (LVMAAVGTGFAGALSTWSTLA), and 82–102 (MLLGYTTATILGGMVAVWCGL). 2 residues coordinate Na(+): Gly-59 and Ser-62.

The protein belongs to the fluoride channel Fluc/FEX (TC 1.A.43) family.

It localises to the cell membrane. The catalysed reaction is fluoride(in) = fluoride(out). Its activity is regulated as follows. Na(+) is not transported, but it plays an essential structural role and its presence is essential for fluoride channel function. Its function is as follows. Fluoride-specific ion channel. Important for reducing fluoride concentration in the cell, thus reducing its toxicity. This is Fluoride-specific ion channel FluC 2 from Corynebacterium diphtheriae (strain ATCC 700971 / NCTC 13129 / Biotype gravis).